A 370-amino-acid chain; its full sequence is Cobalt-precorrin-5B C(1)-methyltransferase (370 aa).

This sequence belongs to the CbiD family.

It carries out the reaction Co-precorrin-5B + S-adenosyl-L-methionine = Co-precorrin-6A + S-adenosyl-L-homocysteine. It functions in the pathway cofactor biosynthesis; adenosylcobalamin biosynthesis; cob(II)yrinate a,c-diamide from sirohydrochlorin (anaerobic route): step 6/10. Catalyzes the methylation of C-1 in cobalt-precorrin-5B to form cobalt-precorrin-6A. The polypeptide is Cobalt-precorrin-5B C(1)-methyltransferase (Nostoc sp. (strain PCC 7120 / SAG 25.82 / UTEX 2576)).